A 100-amino-acid polypeptide reads, in one-letter code: Urease subunit gamma (100 aa).

This sequence belongs to the urease gamma subunit family. In terms of assembly, heterotrimer of UreA (gamma), UreB (beta) and UreC (alpha) subunits. Three heterotrimers associate to form the active enzyme.

The protein resides in the cytoplasm. It carries out the reaction urea + 2 H2O + H(+) = hydrogencarbonate + 2 NH4(+). The protein operates within nitrogen metabolism; urea degradation; CO(2) and NH(3) from urea (urease route): step 1/1. The sequence is that of Urease subunit gamma from Azotobacter vinelandii (strain DJ / ATCC BAA-1303).